Here is a 273-residue protein sequence, read N- to C-terminus: Large ribosomal subunit protein uL2 (273 aa).

2 disordered regions span residues 31 to 50 (APLL…GRIT) and 221 to 273 (RGTA…RRGK). Residues 253–273 (KGKKTRHNKRTDKYIVRRRGK) are compositionally biased toward basic residues.

Belongs to the universal ribosomal protein uL2 family. Part of the 50S ribosomal subunit. Forms a bridge to the 30S subunit in the 70S ribosome.

Functionally, one of the primary rRNA binding proteins. Required for association of the 30S and 50S subunits to form the 70S ribosome, for tRNA binding and peptide bond formation. It has been suggested to have peptidyltransferase activity; this is somewhat controversial. Makes several contacts with the 16S rRNA in the 70S ribosome. The chain is Large ribosomal subunit protein uL2 from Actinobacillus pleuropneumoniae serotype 7 (strain AP76).